We begin with the raw amino-acid sequence, 393 residues long: Iripin-5 (393 aa).

The N-terminal stretch at 1–16 (MKTLIVLMCSLVVVWA) is a signal peptide. N-linked (GlcNAc...) asparagine glycans are attached at residues Asn198 and Asn245.

It belongs to the serpin family. As to expression, highly expressed in female salivary gland during blood feeding. Expressed in female midgut and ovary during blood feeding.

The protein localises to the secreted. Serine protease inhibitor that modulates blood feeding of ticks on vertebrate species. Inhibits host neutrophil elastase (ELANE) and proteinase 3/myeloblastin (PRTN3). Moderately inhibits host chymase, cathepsin G (CTSG), trypsin and alpha-chymotrypsin. Decreases host neutrophil migration. Decreases nitric oxide production by host macrophages. Decreases host complement activity. The protein is Iripin-5 of Ixodes ricinus (Common tick).